The following is a 228-amino-acid chain: UPF0758 protein CKR_0778 (228 aa).

The MPN domain maps to 106–228; the sequence is RICSPQDAAV…FISLKEKGIL (123 aa). Zn(2+) contacts are provided by His-177, His-179, and Asp-190. Positions 177–190 match the JAMM motif motif; the sequence is HNHPSGDPSPSNED.

The protein belongs to the UPF0758 family.

This Clostridium kluyveri (strain NBRC 12016) protein is UPF0758 protein CKR_0778.